A 317-amino-acid chain; its full sequence is Ribonuclease Z (317 aa).

7 residues coordinate Zn(2+): H63, H65, D67, H68, H143, D213, and H273. The Proton acceptor role is filled by D67.

This sequence belongs to the RNase Z family. Homodimer. The cofactor is Zn(2+).

It catalyses the reaction Endonucleolytic cleavage of RNA, removing extra 3' nucleotides from tRNA precursor, generating 3' termini of tRNAs. A 3'-hydroxy group is left at the tRNA terminus and a 5'-phosphoryl group is left at the trailer molecule.. Zinc phosphodiesterase, which displays some tRNA 3'-processing endonuclease activity. Probably involved in tRNA maturation, by removing a 3'-trailer from precursor tRNA. The chain is Ribonuclease Z from Methanocaldococcus jannaschii (strain ATCC 43067 / DSM 2661 / JAL-1 / JCM 10045 / NBRC 100440) (Methanococcus jannaschii).